Reading from the N-terminus, the 262-residue chain is Putative non-heme bromoperoxidase BpoC (262 aa).

Residues R21, 87 to 88, and R120 each bind substrate; that span reads SM. Residue S87 is part of the active site. Active-site residues include D211 and H239. Residue H239 participates in substrate binding.

It belongs to the AB hydrolase superfamily. As to quaternary structure, homodimer.

The sequence is that of Putative non-heme bromoperoxidase BpoC (bpoC) from Mycobacterium tuberculosis (strain CDC 1551 / Oshkosh).